A 118-amino-acid polypeptide reads, in one-letter code: Large ribosomal subunit protein uL18 (118 aa).

It belongs to the universal ribosomal protein uL18 family. As to quaternary structure, part of the 50S ribosomal subunit; part of the 5S rRNA/L5/L18/L25 subcomplex. Contacts the 5S and 23S rRNAs.

In terms of biological role, this is one of the proteins that bind and probably mediate the attachment of the 5S RNA into the large ribosomal subunit, where it forms part of the central protuberance. In Dechloromonas aromatica (strain RCB), this protein is Large ribosomal subunit protein uL18.